The following is a 308-amino-acid chain: Protoheme IX farnesyltransferase (308 aa).

Transmembrane regions (helical) follow at residues 31 to 51, 53 to 73, 102 to 122, 124 to 144, 149 to 169, 170 to 190, 240 to 260, and 288 to 308; these read VIEL…RGTV, PLLI…ANAL, NALV…WWTT, LLSG…YTLL, TSQN…IGWS, AVTG…FFWT, LALA…VWFL, and YLAV…PHLF.

It belongs to the UbiA prenyltransferase family. Protoheme IX farnesyltransferase subfamily.

The protein localises to the cell membrane. The catalysed reaction is heme b + (2E,6E)-farnesyl diphosphate + H2O = Fe(II)-heme o + diphosphate. It participates in porphyrin-containing compound metabolism; heme O biosynthesis; heme O from protoheme: step 1/1. Its function is as follows. Converts heme B (protoheme IX) to heme O by substitution of the vinyl group on carbon 2 of heme B porphyrin ring with a hydroxyethyl farnesyl side group. In Mycobacterium avium (strain 104), this protein is Protoheme IX farnesyltransferase.